The chain runs to 362 residues: Adenosine deaminase (362 aa).

Zn(2+) contacts are provided by His19 and His21. 3 residues coordinate substrate: His21, Asp23, and Gly181. His208 is a binding site for Zn(2+). Residue Glu211 is the Proton donor of the active site. Asp300 provides a ligand contact to Zn(2+).

This sequence belongs to the metallo-dependent hydrolases superfamily. Adenosine and AMP deaminases family. Adenosine deaminase subfamily. Zn(2+) is required as a cofactor.

It carries out the reaction adenosine + H2O + H(+) = inosine + NH4(+). The enzyme catalyses 2'-deoxyadenosine + H2O + H(+) = 2'-deoxyinosine + NH4(+). In terms of biological role, catalyzes the hydrolytic deamination of adenosine and 2-deoxyadenosine. The polypeptide is Adenosine deaminase (Mycobacterium leprae (strain TN)).